Consider the following 209-residue polypeptide: Superoxide dismutase [Mn/Fe] (209 aa).

H38, H90, D172, and H176 together coordinate Fe(3+). Mn(2+) is bound by residues H38, H90, D172, and H176.

The protein belongs to the iron/manganese superoxide dismutase family. Requires Mn(2+) as cofactor. Fe(3+) is required as a cofactor.

The enzyme catalyses 2 superoxide + 2 H(+) = H2O2 + O2. Functionally, destroys superoxide anion radicals which are normally produced within the cells and which are toxic to biological systems. Catalyzes the dismutation of superoxide anion radicals into O2 and H2O2 by successive reduction and oxidation of the transition metal ion at the active site. The protein is Superoxide dismutase [Mn/Fe] (sodB) of Rickettsia bellii (strain RML369-C).